The sequence spans 125 residues: Small ribosomal subunit protein uS12m (125 aa).

This sequence belongs to the universal ribosomal protein uS12 family. As to quaternary structure, component of the mitochondrial ribosome small subunit.

Its subcellular location is the mitochondrion. Functionally, protein S12 is involved in the translation initiation step. This Arabidopsis thaliana (Mouse-ear cress) protein is Small ribosomal subunit protein uS12m (RPS12).